The sequence spans 386 residues: 5-hydroxytryptamine receptor 1B (386 aa).

Residues 1–42 (MEEQGIQCAPPPPAASQTGVPLVNLSHNCSAESHIYQDSIAL) lie on the Extracellular side of the membrane. N-linked (GlcNAc...) asparagine glycosylation is found at asparagine 24 and asparagine 28. A helical transmembrane segment spans residues 43 to 68 (PWKVLLVALLALITLATTLSNAFVIA). Residues 69–82 (TVYRTRKLHTPANY) are Cytoplasmic-facing. Residues 83-107 (LIASLAVTDLLVSILVMPVSTMYTV) form a helical membrane-spanning segment. Over 108–115 (TGRWTLGQ) the chain is Extracellular. Residues 116-141 (VVCDFWLSSDITCCTASIMHLCVIAL) form a helical membrane-spanning segment. The cysteines at positions 118 and 195 are disulfide-linked. Residues aspartate 125 and threonine 130 each contribute to the ergotamine site. A DRY motif; important for ligand-induced conformation changes and signaling motif is present at residues 142-144 (DRY). Topologically, residues 142–161 (DRYWAITDAVEYAAKRTPKR) are cytoplasmic. A helical membrane pass occupies residues 162 to 180 (AAIMIALVWVFSISISLPP). The Extracellular segment spans residues 181 to 201 (FFWRQAKAEEEVLTCLVNTDH). Valine 197 serves as a coordination point for ergotamine. The chain crosses the membrane as a helical span at residues 202–225 (VLYTVYSTGGAFYLPTLLLIALYG). The Cytoplasmic segment spans residues 226-311 (RIYVEARSRI…AARERKATKT (86 aa)). Residues 255–268 (DSPGSTTSVTSINS) show a composition bias toward polar residues. The tract at residues 255-278 (DSPGSTTSVTSINSRAPDLPSESG) is disordered. A helical membrane pass occupies residues 312-333 (LGIILGAFIVCWLPFFIISLVM). At 334 to 343 (PICKDACWFH) the chain is on the extracellular side. The helical transmembrane segment at 344-366 (MATLDFFNWLGYLNSLINPIIYT) threads the bilayer. Residues 361–365 (NPIIY) carry the NPxxY motif; important for ligand-induced conformation changes and signaling motif. At 367–386 (MSNEDFKQAFHKLIRFKCAG) the chain is on the cytoplasmic side. Cysteine 384 carries the S-palmitoyl cysteine lipid modification.

Belongs to the G-protein coupled receptor 1 family. In terms of assembly, homodimer. Heterodimer with HTR1D. Phosphorylated. Desensitization of the receptor may be mediated by its phosphorylation. In terms of processing, palmitoylated.

The protein localises to the cell membrane. Functionally, G-protein coupled receptor for 5-hydroxytryptamine (serotonin). Also functions as a receptor for ergot alkaloid derivatives, various anxiolytic and antidepressant drugs and other psychoactive substances, such as lysergic acid diethylamide (LSD). Ligand binding causes a conformation change that triggers signaling via guanine nucleotide-binding proteins (G proteins) and modulates the activity of downstream effectors, such as adenylate cyclase. HTR1B is coupled to G(i)/G(o) G alpha proteins and mediates inhibitory neurotransmission by inhibiting adenylate cyclase activity. Arrestin family members inhibit signaling via G proteins and mediate activation of alternative signaling pathways. Regulates the release of 5-hydroxytryptamine, dopamine and acetylcholine in the brain, and thereby affects neural activity, nociceptive processing, pain perception, mood and behavior. Besides, plays a role in vasoconstriction of cerebral arteries. This chain is 5-hydroxytryptamine receptor 1B (HTR1B), found in Cricetulus griseus (Chinese hamster).